The chain runs to 412 residues: Arginine biosynthesis bifunctional protein ArgJ (412 aa).

Positions 155, 181, 192, 279, 407, and 412 each coordinate substrate. The active-site Nucleophile is threonine 192.

The protein belongs to the ArgJ family. In terms of assembly, heterotetramer of two alpha and two beta chains.

The protein localises to the cytoplasm. The enzyme catalyses N(2)-acetyl-L-ornithine + L-glutamate = N-acetyl-L-glutamate + L-ornithine. It catalyses the reaction L-glutamate + acetyl-CoA = N-acetyl-L-glutamate + CoA + H(+). The protein operates within amino-acid biosynthesis; L-arginine biosynthesis; L-ornithine and N-acetyl-L-glutamate from L-glutamate and N(2)-acetyl-L-ornithine (cyclic): step 1/1. It participates in amino-acid biosynthesis; L-arginine biosynthesis; N(2)-acetyl-L-ornithine from L-glutamate: step 1/4. Its function is as follows. Catalyzes two activities which are involved in the cyclic version of arginine biosynthesis: the synthesis of N-acetylglutamate from glutamate and acetyl-CoA as the acetyl donor, and of ornithine by transacetylation between N(2)-acetylornithine and glutamate. In Aromatoleum aromaticum (strain DSM 19018 / LMG 30748 / EbN1) (Azoarcus sp. (strain EbN1)), this protein is Arginine biosynthesis bifunctional protein ArgJ.